The chain runs to 261 residues: 8-demethyl-8-(2,3-dimethoxy-alpha-L-rhamnosyl)-tetracenomycin-C 4'-O-methyltransferase (261 aa).

S-adenosyl-L-methionine-binding positions include Thr53 to Met54, Glu81 to Trp85, Asp111 to Gly115, Phe167, Asp185 to Gly186, and Ser191. Asp185 is a binding site for Mg(2+). Mg(2+) is bound by residues Asp212 and Asp213.

The protein belongs to the methyltransferase TylF/MycF family. Requires Mg(2+) as cofactor.

It carries out the reaction 8-demethyl-8-(2,3-di-O-methyl-alpha-L-rhamnosyl)-tetracenomycin C + S-adenosyl-L-methionine = 8-demethyl-8-(2,3,4-tri-O-methyl-alpha-L-rhamnosyl)-tetracenomycin C + S-adenosyl-L-homocysteine + H(+). Its pathway is antibiotic biosynthesis. In terms of biological role, O-methyltransferase involved in the biosynthesis of the permethylated L-rhamnose moiety of elloramycin, an antitumor polyketide. Mediates the methylation of the hydroxy groups at the 4'-position after the sugar moiety has been attached to the aglycon. The chain is 8-demethyl-8-(2,3-dimethoxy-alpha-L-rhamnosyl)-tetracenomycin-C 4'-O-methyltransferase from Streptomyces olivaceus.